Consider the following 345-residue polypeptide: Arginine N-succinyltransferase (345 aa).

Leu125 serves as a coordination point for succinyl-CoA. His229 (proton donor) is an active-site residue.

It belongs to the arginine N-succinyltransferase family.

It catalyses the reaction succinyl-CoA + L-arginine = N(2)-succinyl-L-arginine + CoA + H(+). The protein operates within amino-acid degradation; L-arginine degradation via AST pathway; L-glutamate and succinate from L-arginine: step 1/5. Functionally, catalyzes the transfer of succinyl-CoA to arginine to produce N(2)-succinylarginine. This chain is Arginine N-succinyltransferase, found in Yersinia enterocolitica serotype O:8 / biotype 1B (strain NCTC 13174 / 8081).